A 213-amino-acid chain; its full sequence is Nicolin-1 (213 aa).

Part of the neuronal tubulin polyglutamylase complex which contains TPGS1, TPGS2, TTLL1, LRRC49 and NICN1.

It is found in the nucleus. This chain is Nicolin-1 (NICN1), found in Canis lupus familiaris (Dog).